A 565-amino-acid chain; its full sequence is 2-isopropylmalate synthase (565 aa).

One can recognise a Pyruvate carboxyltransferase domain in the interval 37–312 (PRWCSVDLRD…DPMIDLSDID (276 aa)). Residues D46, H251, H253, and N287 each contribute to the Mg(2+) site. The tract at residues 446 to 565 (EGGDPAASLE…SAVNRASRES (120 aa)) is regulatory domain.

Belongs to the alpha-IPM synthase/homocitrate synthase family. LeuA type 2 subfamily. As to quaternary structure, homodimer. Mg(2+) is required as a cofactor.

The protein resides in the cytoplasm. It catalyses the reaction 3-methyl-2-oxobutanoate + acetyl-CoA + H2O = (2S)-2-isopropylmalate + CoA + H(+). The protein operates within amino-acid biosynthesis; L-leucine biosynthesis; L-leucine from 3-methyl-2-oxobutanoate: step 1/4. Its function is as follows. Catalyzes the condensation of the acetyl group of acetyl-CoA with 3-methyl-2-oxobutanoate (2-ketoisovalerate) to form 3-carboxy-3-hydroxy-4-methylpentanoate (2-isopropylmalate). The chain is 2-isopropylmalate synthase from Parafrankia sp. (strain EAN1pec).